A 208-amino-acid chain; its full sequence is ATP synthase subunit beta, chloroplastic (208 aa).

It belongs to the ATPase alpha/beta chains family. In terms of assembly, F-type ATPases have 2 components, CF(1) - the catalytic core - and CF(0) - the membrane proton channel. CF(1) has five subunits: alpha(3), beta(3), gamma(1), delta(1), epsilon(1). CF(0) has four main subunits: a(1), b(1), b'(1) and c(9-12).

It is found in the plastid. The protein localises to the chloroplast thylakoid membrane. The catalysed reaction is ATP + H2O + 4 H(+)(in) = ADP + phosphate + 5 H(+)(out). Functionally, produces ATP from ADP in the presence of a proton gradient across the membrane. The catalytic sites are hosted primarily by the beta subunits. This Hypolepis hostilis (Fern) protein is ATP synthase subunit beta, chloroplastic (atpB).